A 186-amino-acid chain; its full sequence is Ribosome-recycling factor (186 aa).

The protein belongs to the RRF family.

The protein resides in the cytoplasm. In terms of biological role, responsible for the release of ribosomes from messenger RNA at the termination of protein biosynthesis. May increase the efficiency of translation by recycling ribosomes from one round of translation to another. This is Ribosome-recycling factor from Rickettsia massiliae (strain Mtu5).